Here is a 215-residue protein sequence, read N- to C-terminus: Probable phosphoglycerate mutase GpmB (215 aa).

Substrate contacts are provided by residues 8 to 15, 21 to 22, arginine 58, lysine 60, 82 to 85, 104 to 105, and 151 to 152; these read RHGETQWN, QG, ELDM, RR, and GI. Histidine 9 functions as the Tele-phosphohistidine intermediate in the catalytic mechanism. Glutamate 82 (proton donor/acceptor) is an active-site residue.

The protein belongs to the phosphoglycerate mutase family. GpmB subfamily.

The catalysed reaction is (2R)-2-phosphoglycerate = (2R)-3-phosphoglycerate. Its pathway is carbohydrate degradation; glycolysis; pyruvate from D-glyceraldehyde 3-phosphate: step 3/5. This Salmonella typhi protein is Probable phosphoglycerate mutase GpmB.